The primary structure comprises 124 residues: Testis-expressed protein 54 (124 aa).

Positions 1–10 (MGCCQDKDFE) are enriched in basic and acidic residues. Disordered stretches follow at residues 1 to 77 (MGCC…SNES) and 90 to 124 (FGRR…PEKG). Positions 11 to 30 (MSDEQSKEEESEDGREDETT) are enriched in acidic residues. Composition is skewed to basic and acidic residues over residues 34–50 (RGPR…RGEL) and 101–124 (RQPD…PEKG).

As to expression, expressed in Testis.

This chain is Testis-expressed protein 54, found in Homo sapiens (Human).